The primary structure comprises 557 residues: Laccase-11 (557 aa).

An N-terminal signal peptide occupies residues 1-23 (MKMGFLFLFCYLLAFLGYSPVDA). Plastocyanin-like domains lie at 31 to 147 (DVQV…PAPG) and 158 to 308 (ESNI…YKGV). Asparagine 36, asparagine 69, and asparagine 77 each carry an N-linked (GlcNAc...) asparagine glycan. Cu cation contacts are provided by histidine 81 and histidine 83. Residue asparagine 115 is glycosylated (N-linked (GlcNAc...) asparagine). Positions 126 and 128 each coordinate Cu cation. N-linked (GlcNAc...) asparagine glycosylation is found at asparagine 240, asparagine 296, asparagine 323, asparagine 371, asparagine 381, asparagine 398, asparagine 416, and asparagine 440. In terms of domain architecture, Plastocyanin-like 3 spans 406–541 (DFPDRPPKAF…KMAFVVENGE (136 aa)). Residues histidine 458, histidine 461, histidine 463, histidine 520, cysteine 521, histidine 522, and histidine 526 each contribute to the Cu cation site.

It belongs to the multicopper oxidase family. The cofactor is Cu cation. In terms of tissue distribution, ubiquitous and constitutive.

The protein localises to the secreted. It is found in the extracellular space. It localises to the apoplast. It catalyses the reaction 4 hydroquinone + O2 = 4 benzosemiquinone + 2 H2O. In terms of biological role, lignin degradation and detoxification of lignin-derived products. This chain is Laccase-11 (LAC11), found in Arabidopsis thaliana (Mouse-ear cress).